We begin with the raw amino-acid sequence, 730 residues long: MHCGLLEQPDMDSTESWIERCLSESENKCYSSHTSLGNISNDETDEEKENRASKPHSTPATLQWLGENYEIAEGVCIPRSALYMHYLDFCEKNDTQPVNAASFGKIIRQQFPQLTTRRLGTRGQSKYHYYGIAVKESSQYYDVMYSKKGAAWVNETGKKEVTKQTVAYSPRSKLGTLLPEFPNVKDLNLPSSLPEEKISTFIMMYRTHCQRILDTVIRANFDEVQSFLLHFWQGMPPHMLPVLGSSTVVNIVGVCDSILYKAISGVLMPTVLQALPDSLTQVIRKFAKQLDEWLKVALHDLPENLRNIKFELSKRFSQILRRQTSLNHLCQASRTVIHSADITFQMLEDWRNVDLNSITKQSLYTIEDSREEHRKLIIQLYQEFDHLLEDQSPIESYIDWLDSMVDRCVVKVASKKQGSLKKVAQQFLLIWSCFGTRVIRDMTLHSAPSFGSFHLIHLMFDDYVLYLLESLHCQERANELMRAMKGEAHGEIREERVLGEPAISTPSPVPFSPAASSSSVEIPSATSPVSNQSPEVGVVAATTGTMQSYTWSLTYTVTTAANGPGENGQQVPCMRSPHMTPSVTHRIPVYPHREDGYTGSYNYGTYSNQGHHPIASQYTSLPHESGLSGPLYTAYHRSSSQYPFNSQTRMEPCLMSGATRLHPSQVAPRWPDVTSTNTCFTSPTMHSARYANTSDMYTSLAPRRNSDYEHMQHFPGFAYINGEASAGWAK.

A compositionally biased stretch (polar residues) spans 30 to 41 (YSSHTSLGNISN). The segment at 30-59 (YSSHTSLGNISNDETDEEKENRASKPHSTP) is disordered. A DNA-binding region (RFX-type winged-helix) is located at residues 61-136 (TLQWLGENYE…YHYYGIAVKE (76 aa)). Residues 500–532 (EPAISTPSPVPFSPAASSSSVEIPSATSPVSNQ) are disordered. Low complexity predominate over residues 512–528 (SPAASSSSVEIPSATSP).

Belongs to the RFX family.

The protein resides in the nucleus. Required for neural tube ciliogenesis during embryogenesis. This chain is Regulatory factor X 4, found in Xenopus laevis (African clawed frog).